A 1117-amino-acid chain; its full sequence is A disintegrin and metalloproteinase with thrombospondin motifs 6 (1117 aa).

The signal sequence occupies residues 1 to 21 (MEILWKTLTWILSLIMASSEF). Residues 22-244 (HSDHRLSYSS…NTHIHHRQKR (223 aa)) constitute a propeptide that is removed on maturation. N-linked (GlcNAc...) asparagine glycans are attached at residues N99, N172, N222, and N234. In terms of domain architecture, Peptidase M12B spans 250-468 (RFVETLVVAD…GRGTCLDNEP (219 aa)). Intrachain disulfides connect C326–C387, C362–C369, C381–C463, C420–C447, C490–C512, C501–C519, C507–C542, C532–C547, C570–C607, C574–C612, and C585–C597. H403 provides a ligand contact to Zn(2+). The active site involves E404. Residues H407 and H413 each coordinate Zn(2+). Residues 495-557 (GATSRQCKYG…VPFGTWPQSI (63 aa)) enclose the Disintegrin domain. Residues 558–613 (DGGWGPWSLWGECSRTCGGGVSSSLRHCDSPAPSGGGKYCLGERKRYRSCNTDPCP) form the TSP type-1 1 domain. The spacer stretch occupies residues 717-843 (DAIEGFFNDS…GSGDNEVGFT (127 aa)). A glycan (N-linked (GlcNAc...) asparagine) is linked at N724. TSP type-1 domains follow at residues 840 to 900 (VGFT…EPCP), 902 to 960 (EWFI…QSCP), 962 to 1007 (QWVA…SKPP), and 1018 to 1073 (PPPR…SKCD). Intrachain disulfides connect C911/C954, C915/C959, and C926/C943. N-linked (GlcNAc...) asparagine glycosylation is present at N956. The 39-residue stretch at 1079-1117 (NTEECKDVNKVAYCPLVLKFKFCSRAYFRQMCCKTCQGH) folds into the PLAC domain.

Zn(2+) is required as a cofactor. The precursor is cleaved by a furin endopeptidase. In terms of processing, glycosylated. Can be O-fucosylated by POFUT2 on a serine or a threonine residue found within the consensus sequence C1-X(2)-(S/T)-C2-G of the TSP type-1 repeat domains where C1 and C2 are the first and second cysteine residue of the repeat, respectively. Fucosylated repeats can then be further glycosylated by the addition of a beta-1,3-glucose residue by the glucosyltransferase, B3GALTL. Fucosylation mediates the efficient secretion of ADAMTS family members. Can also be C-glycosylated with one or two mannose molecules on tryptophan residues within the consensus sequence W-X-X-W of the TPRs, and N-glycosylated. These other glycosylations can also facilitate secretion. In terms of tissue distribution, expressed at low levels in placenta and barely detectable in a number of other tissues.

It localises to the secreted. It is found in the extracellular space. The protein resides in the extracellular matrix. The sequence is that of A disintegrin and metalloproteinase with thrombospondin motifs 6 (ADAMTS6) from Homo sapiens (Human).